Reading from the N-terminus, the 574-residue chain is EEDIIITTKNGKVRGMNLPVLGGTVTAFLGIPYAQPPLGRLRFKKPQSLTKWSNIWNATKYANSCYQNTDQSFPGFLGSEMWNPNTELSEDCLYLNVWIPAPKPKNATVMIWIYGGGFQTGTSSLPVYDGKFLARVERVIVVSMNYRVGALGFLALSENPEAPGNMGLFDQQLALQWVQKNIAAFGGNPRSVTLFGESAGAASVSLHLLSPRSQPLFTRAILQSGSSNAPWAVTSLYEARNRTLTLAKRMGCSRDNETEMIKCLRDKDPQEILLNEVFVVPYDTLLSVNFGPTVDGDFLTDMPDTLLQLGQFKRTQILVGVNKDEGTAFLVYGAPGFSKDNNSIITRKEFQEGLKIFFPRVSEFGRESILFHYMDWLDDQRAENYREALDDVVGDYNIICPALEFTRKFSELGNDAFFYYFEHRSTKLPWPEWMGVMHGYEIEFVFGLPLERRVNYTRAEEILSRSIMKRWANFAKYGNPNGTQNNSTRWPVFKSTEQKYLTLNTESPKVYTKLRAQQCRFWTLFFPKVLELTGNIDEAEREWKAGFHRWNNYMMDWKNQFNDYTSKKESCSDF.

N-linked (GlcNAc...) asparagine glycosylation is present at Asn57. Residues Cys65 and Cys92 are joined by a disulfide bond. An N-linked (GlcNAc...) asparagine glycan is attached at Asn106. 116–117 (GG) is a substrate binding site. Ser198 serves as the catalytic Acyl-ester intermediate. Position 198 is a phosphoserine (Ser198). Residues Asn241 and Asn256 are each glycosylated (N-linked (GlcNAc...) asparagine). Cys252 and Cys263 are joined by a disulfide. Glu325 acts as the Charge relay system in catalysis. The N-linked (GlcNAc...) asparagine glycan is linked to Asn341. Cys400 and Cys519 are disulfide-bonded. The active-site Charge relay system is the His438. Residues Asn455, Asn481, and Asn486 are each glycosylated (N-linked (GlcNAc...) asparagine).

It belongs to the type-B carboxylesterase/lipase family. As to quaternary structure, homotetramer; disulfide-linked. Dimer of dimers. As to expression, detected in blood plasma (at protein level). Present in most cells except erythrocytes.

It is found in the secreted. It catalyses the reaction an acylcholine + H2O = a carboxylate + choline + H(+). Esterase with broad substrate specificity. Contributes to the inactivation of the neurotransmitter acetylcholine. Can degrade neurotoxic organophosphate esters. In Equus caballus (Horse), this protein is Cholinesterase (BCHE).